We begin with the raw amino-acid sequence, 448 residues long: Exodeoxyribonuclease 7 large subunit (448 aa).

This sequence belongs to the XseA family. Heterooligomer composed of large and small subunits.

The protein localises to the cytoplasm. It catalyses the reaction Exonucleolytic cleavage in either 5'- to 3'- or 3'- to 5'-direction to yield nucleoside 5'-phosphates.. Its function is as follows. Bidirectionally degrades single-stranded DNA into large acid-insoluble oligonucleotides, which are then degraded further into small acid-soluble oligonucleotides. The chain is Exodeoxyribonuclease 7 large subunit from Shewanella sp. (strain MR-7).